The sequence spans 645 residues: Homeobox protein B-H2 (645 aa).

Disordered regions lie at residues Met1–Thr50, Ser86–Leu134, Arg149–Pro176, Ser240–Arg259, Met265–Thr385, and Gly553–Val645. Positions Ser18–Ala29 are enriched in low complexity. Residues Gln106–Gln121 show a composition bias toward basic residues. Residues Gln122–Leu134 show a composition bias toward low complexity. Over residues Arg149–Ser165 the composition is skewed to basic and acidic residues. Positions His244–His253 are enriched in basic residues. A compositionally biased stretch (low complexity) spans Asn275–Gly316. A compositionally biased stretch (gly residues) spans Ser317–Gly328. Residues Ser329–Ile339 show a composition bias toward polar residues. Positions Ser362–Ser377 are enriched in low complexity. The segment at residues Gln380–Thr439 is a DNA-binding region (homeobox). The segment covering Gly553–Ala574 has biased composition (low complexity). Polar residues predominate over residues Thr583 to Ile592. Thr593 is modified (phosphothreonine). Residues Pro594–Pro603 are compositionally biased toward pro residues. Residues Ser595 and Ser602 each carry the phosphoserine modification. A compositionally biased stretch (basic and acidic residues) spans Asp618–Glu632. Residues Arg633–Val645 show a composition bias toward acidic residues.

Belongs to the Antp homeobox family. In terms of tissue distribution, B-H1 and B-H2 are abundant in the eye-antenna imaginal disk. Expressed in R1 and R6 cells throughout larval stage until 30 hours after puparium formation, at which time expression is seen in the anterior and posterior primary pigment cells. Coexpressed in embryonic glial cells, neurons of the CNS and PNS, most latitudinal anterior cells of the developing notum and the central circular region of the leg and antennal imaginal disk throughout larval development.

The protein localises to the nucleus. Its function is as follows. B-H1 and B-H2 are regulated by members of the wg signaling pathway; wg and dpp. B-H1 and B-H2 are coexpressed and functionally required in R1 and R6 receptor cells and primary pigment cells for normal eye development. Coexpression is also required for the fate determination of external sensory organs, formation of notal microchaetae, formation of presutural macrochaetae, antennal development and for distal leg morphogenesis; segmentation and specification of tarsal segments 3-5. In Drosophila melanogaster (Fruit fly), this protein is Homeobox protein B-H2 (B-H2).